The chain runs to 249 residues: MIT domain-containing protein 1 (249 aa).

The MIT domain occupies 8–86 (QDPQSTAAAT…KYLDQEKEDG (79 aa)). The tract at residues 168-231 (RGLQEIEESL…SLGYCDFDLR (64 aa)) is important for association with membranes.

In terms of assembly, homodimer. Interacts (via MIT domain) with CHMP1A, CHMP1B, CHMP2A and IST1.

The protein resides in the late endosome membrane. Its subcellular location is the midbody. The protein localises to the membrane. Functionally, required for efficient abscission at the end of cytokinesis, together with components of the ESCRT-III complex. This Homo sapiens (Human) protein is MIT domain-containing protein 1 (MITD1).